Consider the following 310-residue polypeptide: Olfactory receptor 5P1 (310 aa).

Topologically, residues 1-25 (MEPGNHTAVTKFILLGLTDDPTLCV) are extracellular. Asn-5 carries N-linked (GlcNAc...) asparagine glycosylation. Residues 26 to 46 (IFFVFFLGIYIVTLVGNISII) traverse the membrane as a helical segment. Over 47-54 (NLVRSCPQ) the chain is Cytoplasmic. A helical membrane pass occupies residues 55–75 (LQTPMYMFLSHLAFVDIGYST). Topologically, residues 76 to 99 (SVTPIMLIGFIVHETGLPVHACEA) are extracellular. Cysteines 97 and 189 form a disulfide. The helical transmembrane segment at 100–120 (QLCSVVTFGTAECFLLAAMAY) threads the bilayer. The Cytoplasmic portion of the chain corresponds to 121-133 (DRYVAICSPLLYS). Residues 134 to 154 (THMSSQICLLLVGASYVGGCV) form a helical membrane-spanning segment. At 155–196 (NAWTFTGCLLSLSFCGPNKIDHFFCDFSPLLKLSCSDVSIIG) the chain is on the extracellular side. Residues 197–217 (IIPSISAGSIIVVTVFVISVS) form a helical membrane-spanning segment. Residues 218 to 237 (YIYILITILKMRSTEGRHKA) are Cytoplasmic-facing. The helical transmembrane segment at 238 to 258 (FSTCTSHLTAVTLYYGTITFI) threads the bilayer. Topologically, residues 259–271 (YVMPKSSYSTKQN) are extracellular. The helical transmembrane segment at 272–292 (RVVSLFYTVVIPMLNPLIYSL) threads the bilayer. The Cytoplasmic segment spans residues 293–310 (RNRDVKEALRKATLRIYS).

Belongs to the G-protein coupled receptor 1 family.

It is found in the cell membrane. Its function is as follows. Potential odorant receptor. This Mus musculus (Mouse) protein is Olfactory receptor 5P1.